A 174-amino-acid chain; its full sequence is Small ribosomal subunit protein uS7c (174 aa).

Belongs to the universal ribosomal protein uS7 family. In terms of assembly, part of the 30S ribosomal subunit.

The protein localises to the plastid. The protein resides in the chloroplast. One of the primary rRNA binding proteins, it binds directly to 16S rRNA where it nucleates assembly of the head domain of the 30S subunit. In Stigeoclonium helveticum (Green alga), this protein is Small ribosomal subunit protein uS7c (rps7).